The sequence spans 123 residues: Small ribosomal subunit protein uS12cz/uS12cy (123 aa).

It belongs to the universal ribosomal protein uS12 family. In terms of assembly, part of the 30S ribosomal subunit.

The protein resides in the plastid. It localises to the chloroplast. Functionally, with S4 and S5 plays an important role in translational accuracy. Located at the interface of the 30S and 50S subunits. The polypeptide is Small ribosomal subunit protein uS12cz/uS12cy (rps12-A) (Nandina domestica (Heavenly bamboo)).